A 79-amino-acid polypeptide reads, in one-letter code: Putative membrane protein insertion efficiency factor (79 aa).

This sequence belongs to the UPF0161 family.

It is found in the cell inner membrane. Could be involved in insertion of integral membrane proteins into the membrane. This chain is Putative membrane protein insertion efficiency factor, found in Cytophaga hutchinsonii (strain ATCC 33406 / DSM 1761 / CIP 103989 / NBRC 15051 / NCIMB 9469 / D465).